We begin with the raw amino-acid sequence, 55 residues long: Hydrophobic protein LTI6B (55 aa).

2 helical membrane-spanning segments follow: residues Ile-8 to Gly-28 and Phe-31 to Tyr-51.

The protein belongs to the UPF0057 (PMP3) family.

The protein localises to the membrane. In terms of biological role, plays a role in the regulation of membrane potential. Could mediate a proton leak. The chain is Hydrophobic protein LTI6B (LTI6B) from Oryza sativa subsp. indica (Rice).